Reading from the N-terminus, the 318-residue chain is E3 ubiquitin-protein ligase NRDP1 (318 aa).

The RING-type; degenerate zinc finger occupies 18–57 (CPICSGVLEEPVRAPHCEHAFCNACITQWFAQQQICPVDR). The SIAH-type; degenerate zinc-finger motif lies at 78–138 (KLQISCDNAG…MPNHNCIKHL (61 aa)).

It catalyses the reaction S-ubiquitinyl-[E2 ubiquitin-conjugating enzyme]-L-cysteine + [acceptor protein]-L-lysine = [E2 ubiquitin-conjugating enzyme]-L-cysteine + N(6)-ubiquitinyl-[acceptor protein]-L-lysine.. The protein operates within protein modification; protein ubiquitination. In terms of biological role, acts as E3 ubiquitin-protein ligase and regulates the degradation of target proteins. In Danio rerio (Zebrafish), this protein is E3 ubiquitin-protein ligase NRDP1 (rnf41).